We begin with the raw amino-acid sequence, 37 residues long: Cytochrome b6-f complex subunit 5 (37 aa).

A helical membrane pass occupies residues 5 to 25 (FLFGIVLGLIPITLAGLFVTA).

The protein belongs to the PetG family. In terms of assembly, the 4 large subunits of the cytochrome b6-f complex are cytochrome b6, subunit IV (17 kDa polypeptide, PetD), cytochrome f and the Rieske protein, while the 4 small subunits are PetG, PetL, PetM and PetN. The complex functions as a dimer.

Its subcellular location is the plastid. The protein resides in the chloroplast thylakoid membrane. In terms of biological role, component of the cytochrome b6-f complex, which mediates electron transfer between photosystem II (PSII) and photosystem I (PSI), cyclic electron flow around PSI, and state transitions. PetG is required for either the stability or assembly of the cytochrome b6-f complex. The sequence is that of Cytochrome b6-f complex subunit 5 from Capsella bursa-pastoris (Shepherd's purse).